We begin with the raw amino-acid sequence, 280 residues long: Ribosomal protein L11 methyltransferase (280 aa).

T131, G152, D174, and N217 together coordinate S-adenosyl-L-methionine.

The protein belongs to the methyltransferase superfamily. PrmA family.

The protein resides in the cytoplasm. The catalysed reaction is L-lysyl-[protein] + 3 S-adenosyl-L-methionine = N(6),N(6),N(6)-trimethyl-L-lysyl-[protein] + 3 S-adenosyl-L-homocysteine + 3 H(+). Methylates ribosomal protein L11. This chain is Ribosomal protein L11 methyltransferase, found in Bacteroides fragilis (strain ATCC 25285 / DSM 2151 / CCUG 4856 / JCM 11019 / LMG 10263 / NCTC 9343 / Onslow / VPI 2553 / EN-2).